A 179-amino-acid polypeptide reads, in one-letter code: Large ribosomal subunit protein uL5 (179 aa).

Belongs to the universal ribosomal protein uL5 family. Part of the 50S ribosomal subunit; part of the 5S rRNA/L5/L18/L25 subcomplex. Contacts the 5S rRNA and the P site tRNA. Forms a bridge to the 30S subunit in the 70S ribosome.

Functionally, this is one of the proteins that bind and probably mediate the attachment of the 5S RNA into the large ribosomal subunit, where it forms part of the central protuberance. In the 70S ribosome it contacts protein S13 of the 30S subunit (bridge B1b), connecting the 2 subunits; this bridge is implicated in subunit movement. Contacts the P site tRNA; the 5S rRNA and some of its associated proteins might help stabilize positioning of ribosome-bound tRNAs. This Verminephrobacter eiseniae (strain EF01-2) protein is Large ribosomal subunit protein uL5.